Here is a 137-residue protein sequence, read N- to C-terminus: Large ribosomal subunit protein uL16c (137 aa).

Residues 1-21 (MLSPKRTKFRRHHRGRMKGKA) form a disordered region.

Belongs to the universal ribosomal protein uL16 family. In terms of assembly, part of the 50S ribosomal subunit.

It localises to the plastid. The protein resides in the chloroplast. This chain is Large ribosomal subunit protein uL16c, found in Tupiella akineta (Green alga).